Consider the following 358-residue polypeptide: tRNA pseudouridine synthase B (358 aa).

Residues Met-1 to Val-50 form a disordered region. Asp-87 serves as the catalytic Nucleophile.

This sequence belongs to the pseudouridine synthase TruB family. Type 1 subfamily.

It catalyses the reaction uridine(55) in tRNA = pseudouridine(55) in tRNA. Functionally, responsible for synthesis of pseudouridine from uracil-55 in the psi GC loop of transfer RNAs. This chain is tRNA pseudouridine synthase B, found in Nitrobacter winogradskyi (strain ATCC 25391 / DSM 10237 / CIP 104748 / NCIMB 11846 / Nb-255).